Reading from the N-terminus, the 315-residue chain is Ribose-phosphate pyrophosphokinase (315 aa).

Residues 37–39 (DGE) and 96–97 (RQ) each bind ATP. Mg(2+)-binding residues include histidine 131 and aspartate 170. Residue lysine 194 is part of the active site. D-ribose 5-phosphate is bound by residues arginine 196, aspartate 220, and 224-228 (DTGGT).

This sequence belongs to the ribose-phosphate pyrophosphokinase family. Class I subfamily. Homohexamer. Mg(2+) is required as a cofactor.

The protein localises to the cytoplasm. The catalysed reaction is D-ribose 5-phosphate + ATP = 5-phospho-alpha-D-ribose 1-diphosphate + AMP + H(+). It participates in metabolic intermediate biosynthesis; 5-phospho-alpha-D-ribose 1-diphosphate biosynthesis; 5-phospho-alpha-D-ribose 1-diphosphate from D-ribose 5-phosphate (route I): step 1/1. Functionally, involved in the biosynthesis of the central metabolite phospho-alpha-D-ribosyl-1-pyrophosphate (PRPP) via the transfer of pyrophosphoryl group from ATP to 1-hydroxyl of ribose-5-phosphate (Rib-5-P). This chain is Ribose-phosphate pyrophosphokinase, found in Shewanella oneidensis (strain ATCC 700550 / JCM 31522 / CIP 106686 / LMG 19005 / NCIMB 14063 / MR-1).